We begin with the raw amino-acid sequence, 153 residues long: Glucose-6-phosphate 1-dehydrogenase (153 aa).

Residues R21 and K120 each coordinate NADP(+). K120 is a binding site for D-glucose 6-phosphate.

The protein belongs to the glucose-6-phosphate dehydrogenase family.

The protein resides in the cytoplasm. The protein localises to the cytosol. It carries out the reaction D-glucose 6-phosphate + NADP(+) = 6-phospho-D-glucono-1,5-lactone + NADPH + H(+). It participates in carbohydrate degradation; pentose phosphate pathway; D-ribulose 5-phosphate from D-glucose 6-phosphate (oxidative stage): step 1/3. In terms of biological role, cytosolic glucose-6-phosphate dehydrogenase that catalyzes the first and rate-limiting step of the oxidative branch within the pentose phosphate pathway/shunt, an alternative route to glycolysis for the dissimilation of carbohydrates and a major source of reducing power and metabolic intermediates for fatty acid and nucleic acid biosynthetic processes. The protein is Glucose-6-phosphate 1-dehydrogenase (ZW) of Hyalophora cecropia (Cecropia moth).